Reading from the N-terminus, the 72-residue chain is uncharacterized protein (72 aa).

Positions 1–17 are cleaved as a signal peptide; it reads MSLGLAIAVGIVLGVVA.

This is an uncharacterized protein from Schizosaccharomyces pombe (strain 972 / ATCC 24843) (Fission yeast).